We begin with the raw amino-acid sequence, 563 residues long: Arginine--tRNA ligase (563 aa).

The short motif at 121–131 (PNIAKPFSIGH) is the 'HIGH' region element.

This sequence belongs to the class-I aminoacyl-tRNA synthetase family. In terms of assembly, monomer.

Its subcellular location is the cytoplasm. It carries out the reaction tRNA(Arg) + L-arginine + ATP = L-arginyl-tRNA(Arg) + AMP + diphosphate. The polypeptide is Arginine--tRNA ligase (Streptococcus pyogenes serotype M1).